The following is a 446-amino-acid chain: Glutamine synthetase (446 aa).

The GS beta-grasp domain maps to 15–102; sequence RDIRFVRLWF…MFCDITMPDG (88 aa). The GS catalytic domain maps to 109–446; that stretch reads PRHVLRRQLT…PYELRTYLSL (338 aa). Residues E132 and E134 each contribute to the Mg(2+) site. Position 184 (E184) interacts with ATP. Mg(2+) is bound by residues E189 and E196. L-glutamate is bound at residue G241. Position 245 (H245) interacts with Mg(2+). ATP contacts are provided by residues 247–249 and S249; that span reads HMS. Residues R298, E304, and R316 each coordinate L-glutamate. Positions 316 and 321 each coordinate ATP. E336 contacts Mg(2+). R338 contacts L-glutamate.

Belongs to the glutamine synthetase family. In terms of assembly, oligomer of 12 subunits arranged in the form of two hexagons. In its feedback-inhibited form, interacts with TnrA in order to block its DNA-binding activity. The cofactor is Mg(2+).

It localises to the cytoplasm. The catalysed reaction is L-glutamate + NH4(+) + ATP = L-glutamine + ADP + phosphate + H(+). Its activity is regulated as follows. Inhibited by glutamine. In terms of biological role, glutamine synthetase (GS) is an unusual multitasking protein that functions as an enzyme, a transcription coregulator, and a chaperone in ammonium assimilation and in the regulation of genes involved in nitrogen metabolism. It catalyzes the ATP-dependent biosynthesis of glutamine from glutamate and ammonia. Feedback-inhibited GlnA also interacts with and regulates the activity of the transcriptional regulator TnrA. During nitrogen limitation, TnrA is in its DNA-binding active state and turns on the transcription of genes required for nitrogen assimilation. Under conditions of nitrogen excess, feedback-inhibited GlnA forms a stable complex with TnrA, which inhibits its DNA-binding activity. In contrast, feedback-inhibited GlnA acts as a chaperone to stabilize the DNA-binding activity of GlnR, which represses the transcription of nitrogen assimilation genes. The polypeptide is Glutamine synthetase (Mycobacterium bovis (strain ATCC BAA-935 / AF2122/97)).